Consider the following 819-residue polypeptide: MNSTNNTDSQNLDPNASEVEKLLDESAEAEEKTDDHTPPSELFILPLNKRPFFPGMAAPLLIEAGPHYEVLTLLAKSSQKHIGLVLTKKEDANTLKIGFNQLHRVGVSARILRIMPIEGGSAQVLLSIEDRIRIVKPVQDKYLKAKVAYHKENKELTEELKAYSISIVSIIKDLLKLNPLFKEELQIFLGHSDFTEPGKLADFSVALTTATREELQEVLETTDMHDRIDKALVLLKKELDLSRLQSSINQKIEATITKSQKEFFLKEQLKTIKKELGLEKDDHAVDLEKFMERLNKRDVPQYAMDVIQDEMDKLQTLETSSAEYAVCRNYLDWLTIVPWGIQTKEYHDLKKAESILNKDHYGLEDIKQRILELISVGKLANGMKGSIICLVGPPGVGKTSIGRSIAKVLHRKFFRFSVGGMRDEAEIKGHRRTYIGAMPGKLVQALKQSAIMNPVIMIDEVDKIGSSYHGDPASALLEVLDPEQNKDFLDHYLDVRVDLSNVLFILTANVLDSIPDPLLDRMEVLRLSGYILEEKLQIATKYLVPRARKEMGLSAQNVSFQPEALKHMINNYAREAGVRTLNENIKKVLRKVALKIVQNQEKNPSKKSRFTITPKNLQDYLGKPIFSSDRFYEKTPVGVATGLAWTSLGGATLYIESVQVPSSSGKADMHLTGQAGDVMKESSQIAWTYLHSALERYAPGRPFFEKSQVHIHIPEGATPKDGPSAGITMVTSLLSLLLDVPVLNNLGMTGELTLTGRVLGIGGIREKLIAARRSKLNVLIFPEDNRRDYDELPAYLKKGLKVHFVTHYDDVFKIAFPGV.

The span at 1–14 (MNSTNNTDSQNLDP) shows a compositional bias: polar residues. Residues 1 to 41 (MNSTNNTDSQNLDPNASEVEKLLDESAEAEEKTDDHTPPSE) are disordered. Residues 18–38 (EVEKLLDESAEAEEKTDDHTP) are compositionally biased toward basic and acidic residues. The region spanning 42–239 (LFILPLNKRP…KALVLLKKEL (198 aa)) is the Lon N-terminal domain. An ATP-binding site is contributed by 392–399 (GPPGVGKT). The Lon proteolytic domain occupies 634 to 818 (KTPVGVATGL…DDVFKIAFPG (185 aa)). Residues serine 724 and lysine 767 contribute to the active site.

The protein belongs to the peptidase S16 family. As to quaternary structure, homohexamer. Organized in a ring with a central cavity.

It is found in the cytoplasm. It carries out the reaction Hydrolysis of proteins in presence of ATP.. Its function is as follows. ATP-dependent serine protease that mediates the selective degradation of mutant and abnormal proteins as well as certain short-lived regulatory proteins. Required for cellular homeostasis and for survival from DNA damage and developmental changes induced by stress. Degrades polypeptides processively to yield small peptide fragments that are 5 to 10 amino acids long. Binds to DNA in a double-stranded, site-specific manner. The polypeptide is Lon protease (Chlamydia muridarum (strain MoPn / Nigg)).